The following is a 246-amino-acid chain: Probable transcriptional regulatory protein YebC (246 aa).

Positions 1 to 20 (MAGHSKWANTRHRKAAQDAK) are disordered.

It belongs to the TACO1 family.

It is found in the cytoplasm. This Salmonella choleraesuis (strain SC-B67) protein is Probable transcriptional regulatory protein YebC.